The sequence spans 665 residues: Probable potassium transport system protein Kup (665 aa).

Positions 1-18 (MASEAPHASAPDCAPASS) are enriched in low complexity. The segment at 1-31 (MASEAPHASAPDCAPASSDIPQQDGGSTNGH) is disordered. The next 12 membrane-spanning stretches (helical) occupy residues 40–60 (FFAL…TSPL), 83–103 (VVSL…VVFI), 131–151 (LVFV…VITP), 171–191 (GVTN…LFFI), 202–222 (LFGP…LMNL), 245–265 (GLTG…VEAL), 281–301 (WLFF…AFAL), 332–352 (LVLL…TGAF), 380–400 (IFVP…MFTF), 409–429 (AYGL…FIVM), 435–455 (WSMP…ITFL), and 462–482 (FFSG…IMAT).

Belongs to the HAK/KUP transporter (TC 2.A.72) family.

It is found in the cell inner membrane. It catalyses the reaction K(+)(in) + H(+)(in) = K(+)(out) + H(+)(out). In terms of biological role, transport of potassium into the cell. Likely operates as a K(+):H(+) symporter. This is Probable potassium transport system protein Kup from Caulobacter vibrioides (strain ATCC 19089 / CIP 103742 / CB 15) (Caulobacter crescentus).